We begin with the raw amino-acid sequence, 206 residues long: Pyridoxine/pyridoxamine 5'-phosphate oxidase (206 aa).

Residues 53–58 (RMVLLK), 68–69 (YT), K75, and Q97 each bind FMN. K58 is a binding site for substrate. 3 residues coordinate substrate: Y115, R119, and S123. FMN is bound by residues 132–133 (QS) and W177. 183–185 (RLH) lines the substrate pocket. R187 serves as a coordination point for FMN.

Belongs to the pyridoxamine 5'-phosphate oxidase family. Homodimer. Requires FMN as cofactor.

It carries out the reaction pyridoxamine 5'-phosphate + O2 + H2O = pyridoxal 5'-phosphate + H2O2 + NH4(+). The catalysed reaction is pyridoxine 5'-phosphate + O2 = pyridoxal 5'-phosphate + H2O2. The protein operates within cofactor metabolism; pyridoxal 5'-phosphate salvage; pyridoxal 5'-phosphate from pyridoxamine 5'-phosphate: step 1/1. It participates in cofactor metabolism; pyridoxal 5'-phosphate salvage; pyridoxal 5'-phosphate from pyridoxine 5'-phosphate: step 1/1. Functionally, catalyzes the oxidation of either pyridoxine 5'-phosphate (PNP) or pyridoxamine 5'-phosphate (PMP) into pyridoxal 5'-phosphate (PLP). This is Pyridoxine/pyridoxamine 5'-phosphate oxidase from Rhizobium meliloti (strain 1021) (Ensifer meliloti).